The primary structure comprises 306 residues: Ribosomal protein L11 methyltransferase (306 aa).

Residues threonine 139, glycine 173, aspartate 195, and asparagine 242 each contribute to the S-adenosyl-L-methionine site.

The protein belongs to the methyltransferase superfamily. PrmA family.

The protein localises to the cytoplasm. The enzyme catalyses L-lysyl-[protein] + 3 S-adenosyl-L-methionine = N(6),N(6),N(6)-trimethyl-L-lysyl-[protein] + 3 S-adenosyl-L-homocysteine + 3 H(+). Its function is as follows. Methylates ribosomal protein L11. The protein is Ribosomal protein L11 methyltransferase of Trichormus variabilis (strain ATCC 29413 / PCC 7937) (Anabaena variabilis).